Consider the following 314-residue polypeptide: Olfactory receptor 1E16 (314 aa).

Residues Met1–Ala29 are Extracellular-facing. A glycan (N-linked (GlcNAc...) asparagine) is linked at Asn5. Residues Leu30–Ile50 form a helical membrane-spanning segment. Topologically, residues Leu51–Thr57 are cytoplasmic. Residues Pro58–Met78 traverse the membrane as a helical segment. Over Pro79–Cys97 the chain is Extracellular. Cys97 and Cys179 are oxidised to a cystine. Residues Leu98–Met118 form a helical membrane-spanning segment. The Cytoplasmic segment spans residues Ala119–Ser143. Residues Leu144–Ala164 traverse the membrane as a helical segment. Residues Arg165 to Glu196 are Extracellular-facing. Residues Val197–Ser217 form a helical membrane-spanning segment. The Cytoplasmic portion of the chain corresponds to Tyr218–Ser239. Residues Thr240 to Leu260 form a helical membrane-spanning segment. At Ser261 to Asp271 the chain is on the extracellular side. N-linked (GlcNAc...) asparagine glycosylation is found at Asn265 and Asn266. Residues Thr272–Leu292 form a helical membrane-spanning segment. At Arg293 to Leu314 the chain is on the cytoplasmic side.

Belongs to the G-protein coupled receptor 1 family. As to expression, olfactory epithelium.

The protein resides in the cell membrane. Odorant receptor. Activated by a lily-derived aldehyde as well as other odorants. May signal through an inositol 1,4,5-trisphosphate (IP3) second messenger system. This is Olfactory receptor 1E16 from Mus musculus (Mouse).